Reading from the N-terminus, the 104-residue chain is Integration host factor subunit alpha (104 aa).

Belongs to the bacterial histone-like protein family. In terms of assembly, heterodimer of an alpha and a beta chain.

This protein is one of the two subunits of integration host factor, a specific DNA-binding protein that functions in genetic recombination as well as in transcriptional and translational control. The sequence is that of Integration host factor subunit alpha from Bartonella quintana (strain Toulouse) (Rochalimaea quintana).